The chain runs to 333 residues: Ornithine carbamoyltransferase (333 aa).

Residues 56–59, R107, and 134–137 contribute to the carbamoyl phosphate site; these read STRT and HPTQ. Residues N167, D231, and 235 to 236 each bind L-ornithine; that span reads SM. Carbamoyl phosphate contacts are provided by residues 273–274 and R318; that span reads CL.

The protein belongs to the aspartate/ornithine carbamoyltransferase superfamily. OTCase family.

Its subcellular location is the cytoplasm. The enzyme catalyses carbamoyl phosphate + L-ornithine = L-citrulline + phosphate + H(+). Its pathway is amino-acid degradation; L-arginine degradation via ADI pathway; carbamoyl phosphate from L-arginine: step 2/2. Reversibly catalyzes the transfer of the carbamoyl group from carbamoyl phosphate (CP) to the N(epsilon) atom of ornithine (ORN) to produce L-citrulline. This is Ornithine carbamoyltransferase from Clostridium botulinum (strain 657 / Type Ba4).